A 263-amino-acid polypeptide reads, in one-letter code: Probable elongation factor 1-beta/1-delta 2 (263 aa).

An N-acetylserine modification is found at Ser2. The interval 112 to 153 (QGQTSSVAAPAAAPAAAKEEAAGDDDFDLFGSEDEEEDEEKK) is disordered. Acidic residues predominate over residues 133–150 (AGDDDFDLFGSEDEEEDE).

This sequence belongs to the EF-1-beta/EF-1-delta family. As to quaternary structure, EF-1 is composed of 4 subunits: alpha, beta, delta, and gamma.

EF-1-beta and EF-1-delta stimulate the exchange of GDP bound to EF-1-alpha to GTP. The protein is Probable elongation factor 1-beta/1-delta 2 of Caenorhabditis elegans.